We begin with the raw amino-acid sequence, 161 residues long: 2-C-methyl-D-erythritol 2,4-cyclodiphosphate synthase (161 aa).

The a divalent metal cation site is built by aspartate 10 and histidine 12. 4-CDP-2-C-methyl-D-erythritol 2-phosphate is bound by residues 10 to 12 and 36 to 37; these read DVH and HS. Position 44 (histidine 44) interacts with a divalent metal cation. 4-CDP-2-C-methyl-D-erythritol 2-phosphate-binding positions include 58 to 60, 63 to 67, 102 to 108, 134 to 137, phenylalanine 141, and arginine 144; these read DIG, FPDTD, AQVPKMA, and TTTE.

Belongs to the IspF family. In terms of assembly, homotrimer. A divalent metal cation serves as cofactor.

It catalyses the reaction 4-CDP-2-C-methyl-D-erythritol 2-phosphate = 2-C-methyl-D-erythritol 2,4-cyclic diphosphate + CMP. Its pathway is isoprenoid biosynthesis; isopentenyl diphosphate biosynthesis via DXP pathway; isopentenyl diphosphate from 1-deoxy-D-xylulose 5-phosphate: step 4/6. Involved in the biosynthesis of isopentenyl diphosphate (IPP) and dimethylallyl diphosphate (DMAPP), two major building blocks of isoprenoid compounds. Catalyzes the conversion of 4-diphosphocytidyl-2-C-methyl-D-erythritol 2-phosphate (CDP-ME2P) to 2-C-methyl-D-erythritol 2,4-cyclodiphosphate (ME-CPP) with a corresponding release of cytidine 5-monophosphate (CMP). This Shewanella baltica (strain OS223) protein is 2-C-methyl-D-erythritol 2,4-cyclodiphosphate synthase.